A 236-amino-acid chain; its full sequence is Small ribosomal subunit protein uS3 (236 aa).

The KH type-2 domain maps to 39–107; it reads IRLYVLEELK…ETSLNIVEIH (69 aa). Positions 216–236 are disordered; the sequence is ERRAAEVDHSGSSSNRRRENA.

Belongs to the universal ribosomal protein uS3 family. As to quaternary structure, part of the 30S ribosomal subunit. Forms a tight complex with proteins S10 and S14.

Its function is as follows. Binds the lower part of the 30S subunit head. Binds mRNA in the 70S ribosome, positioning it for translation. The sequence is that of Small ribosomal subunit protein uS3 from Bartonella henselae (strain ATCC 49882 / DSM 28221 / CCUG 30454 / Houston 1) (Rochalimaea henselae).